The chain runs to 254 residues: MRIDLNCDIGESFGAYRIGCDAEMIAIASSVNIACGFHGGDPDVMAVTVERALQSGVAIGAHPGFPDLAGFGRREMRLRPSEVTNLIIYQIGALQAFVQAAGGRLHHVKPHGALYNMAAVDDELAAAVALAVKRVDPQLVLYALAGSCLVETAKRLGLTVAQEAFVDRAYRSDGTLAPRNLAGAVITDPETAGTRAVAMVKTGCIPSMDGDLIRIDADTLCLHGDNPGAAAIAKAVRASLETAGIAVKAGFERT.

It belongs to the LamB/PxpA family. In terms of assembly, forms a complex composed of PxpA, PxpB and PxpC.

It carries out the reaction 5-oxo-L-proline + ATP + 2 H2O = L-glutamate + ADP + phosphate + H(+). Functionally, catalyzes the cleavage of 5-oxoproline to form L-glutamate coupled to the hydrolysis of ATP to ADP and inorganic phosphate. In Heliobacterium modesticaldum (strain ATCC 51547 / Ice1), this protein is 5-oxoprolinase subunit A.